Reading from the N-terminus, the 1343-residue chain is DNA-directed RNA polymerase subunit beta (1343 aa).

Belongs to the RNA polymerase beta chain family. The RNAP catalytic core consists of 2 alpha, 1 beta, 1 beta' and 1 omega subunit. When a sigma factor is associated with the core the holoenzyme is formed, which can initiate transcription.

The enzyme catalyses RNA(n) + a ribonucleoside 5'-triphosphate = RNA(n+1) + diphosphate. In terms of biological role, DNA-dependent RNA polymerase catalyzes the transcription of DNA into RNA using the four ribonucleoside triphosphates as substrates. This Shewanella frigidimarina (strain NCIMB 400) protein is DNA-directed RNA polymerase subunit beta.